A 355-amino-acid chain; its full sequence is Peptide chain release factor 1 (355 aa).

Residue Gln-231 is modified to N5-methylglutamine. Positions 280 to 291 (SERLAKESEARK) are enriched in basic and acidic residues. The interval 280 to 303 (SERLAKESEARKSQVGSGDRSERI) is disordered.

The protein belongs to the prokaryotic/mitochondrial release factor family. Methylated by PrmC. Methylation increases the termination efficiency of RF1.

Its subcellular location is the cytoplasm. In terms of biological role, peptide chain release factor 1 directs the termination of translation in response to the peptide chain termination codons UAG and UAA. This chain is Peptide chain release factor 1, found in Campylobacter jejuni (strain RM1221).